Consider the following 463-residue polypeptide: uncharacterized protein (463 aa).

The next 12 helical transmembrane spans lie at 21 to 40 (DFAC…FFYT), 50 to 72 (AGTM…GTIV), 84 to 104 (PYLL…FTTP), 112 to 132 (LIYA…INVP), 156 to 176 (LFAN…AAYL), 186 to 206 (GWQL…IFCF), 237 to 257 (LVVL…SNSV), 271 to 291 (LVKW…PFIP), 311 to 331 (IIGL…ILVC), 334 to 354 (IAAA…PETI), 367 to 387 (GLIY…GGVV), and 408 to 428 (LMGI…LALI).

This sequence belongs to the sodium:galactoside symporter (TC 2.A.2) family.

Its subcellular location is the cell membrane. This is an uncharacterized protein from Bacillus subtilis (strain 168).